We begin with the raw amino-acid sequence, 384 residues long: Cell division protein FtsZ (384 aa).

GTP contacts are provided by residues 20–24 (GGGGN), 107–109 (GTG), E138, R142, and N186.

Belongs to the FtsZ family. Homodimer. Polymerizes to form a dynamic ring structure in a strictly GTP-dependent manner. Interacts directly with several other division proteins.

Its subcellular location is the cytoplasm. In terms of biological role, essential cell division protein that forms a contractile ring structure (Z ring) at the future cell division site. The regulation of the ring assembly controls the timing and the location of cell division. One of the functions of the FtsZ ring is to recruit other cell division proteins to the septum to produce a new cell wall between the dividing cells. Binds GTP and shows GTPase activity. The sequence is that of Cell division protein FtsZ from Buchnera aphidicola subsp. Schizaphis graminum (strain Sg).